Reading from the N-terminus, the 384-residue chain is MDEQDILNELREYRNQDLKYEEGYILGSMCTKPHPMARKISEMFFETNLGDPGLFKGTSKLEKEVVSMIGGILHNKNAFGYLISGGTEANLTAMRAFKNISKSKGKPQNIIIPETAHFSFDKAKDMMDLNVVRPPLTKYFTMDVKFIKDYIEDSKNEVSGIVGIAGCTELGSIDNICELSKIAVENDILLHVDAAFGGFVIPFLDDKYKLDGYNYDFDFSLNGVSSITIDPHKMGLAPISAGGILFRDNMFKKYLDVDAPYLTEKQQATIIGTRSGVGVASTWGIMKLLGIDGYETLVNESMEKTMYLVKKAREYGFETAIDPVMNIVALNDENKHDTCMKLRDENWYVSVCRCVDALRIVVMPHLEIEHIDGFLESLSNTKKY.

Residue Lys233 is modified to N6-(pyridoxal phosphate)lysine.

It belongs to the group II decarboxylase family. MfnA subfamily. The cofactor is pyridoxal 5'-phosphate.

The catalysed reaction is L-tyrosine + H(+) = tyramine + CO2. It catalyses the reaction L-aspartate + H(+) = beta-alanine + CO2. Its pathway is cofactor biosynthesis; methanofuran biosynthesis. It participates in cofactor biosynthesis; coenzyme A biosynthesis. Functionally, catalyzes the decarboxylation of L-tyrosine to produce tyramine for methanofuran biosynthesis. Can also catalyze the decarboxylation of L-aspartate to produce beta-alanine for coenzyme A (CoA) biosynthesis. This is Probable L-tyrosine/L-aspartate decarboxylase from Methanococcus maripaludis (strain DSM 14266 / JCM 13030 / NBRC 101832 / S2 / LL).